A 307-amino-acid chain; its full sequence is MTYIVQTNGLTKTYQGKEVVSNVSMHIKKGEIYGFLGPNGAGKTTIMKMLTSLVKPTSGEIIILGNKFTHTSYEVLGNIGSMIEYPIFYENLTAEENLDLHCEYMGYHNKKAIQEVLDMVNLKQIDKKPVKTFSLGMKQRLGIARAILTKPDLLILDEPVNGLDPLGIKKIRQLFQVLSKEYGMTLLISSHLLGEIEQIADTIGVIRDGRLLEEVSMEDVRGQNTEYIELVTPNQTRACFVLEKELQLTNFKILNEKTIRIYEAEASQAAISKALILNDVDIESMNKKYTSLEDYFIKLINGNSISA.

The ABC transporter domain occupies Val-5–Pro-233. Gly-37–Thr-44 contacts ATP.

The protein belongs to the ABC transporter superfamily.

This is an uncharacterized protein from Bacillus subtilis (strain 168).